A 317-amino-acid polypeptide reads, in one-letter code: Transcriptional regulator LsrR (317 aa).

Positions 33–56 (QSEISDRLGLTRLKVSRLLEKGHQ) form a DNA-binding region, H-T-H motif.

This sequence belongs to the SorC transcriptional regulatory family.

It is found in the cytoplasm. Its activity is regulated as follows. Inactivated by phosphorylated autoinducer-2 (phospho-AI-2). Phospho-AI-2 acts by binding to LsrR, which is then unable to bind to the promoter regions, allowing the transcription of the target genes. Transcriptional regulator that represses the expression of the lsr operon in the absence of the quorum-sensing signaling molecule autoinducer 2 (AI-2). It also represses the expression of the lsrRK operon. Acts by binding directly to the lsrA and lsrR promoter regions. In the presence of phosphorylated autoinducer-2 (phospho-AI-2), LsrR is inactivated, leading to the transcription of the genes. In Escherichia coli O139:H28 (strain E24377A / ETEC), this protein is Transcriptional regulator LsrR (lsrR).